Here is a 116-residue protein sequence, read N- to C-terminus: Large ribosomal subunit protein uL18 (116 aa).

This sequence belongs to the universal ribosomal protein uL18 family. In terms of assembly, part of the 50S ribosomal subunit; part of the 5S rRNA/L5/L18/L25 subcomplex. Contacts the 5S and 23S rRNAs.

This is one of the proteins that bind and probably mediate the attachment of the 5S RNA into the large ribosomal subunit, where it forms part of the central protuberance. The chain is Large ribosomal subunit protein uL18 from Pseudomonas putida (strain GB-1).